Consider the following 250-residue polypeptide: DNA repair protein RecO (250 aa).

The protein belongs to the RecO family.

Its function is as follows. Involved in DNA repair and RecF pathway recombination. In Staphylococcus aureus (strain Mu3 / ATCC 700698), this protein is DNA repair protein RecO.